A 191-amino-acid chain; its full sequence is Probable GTP-binding protein EngB (191 aa).

One can recognise an EngB-type G domain in the interval 19-188; that stretch reads NIPEICFMGR…HKKIFELFVE (170 aa). GTP contacts are provided by residues 27 to 34, 53 to 57, 70 to 73, 136 to 139, and 167 to 169; these read GRSNVGKS, GRTQL, DLPG, NKFD, and AST. Mg(2+) is bound by residues serine 34 and threonine 55.

The protein belongs to the TRAFAC class TrmE-Era-EngA-EngB-Septin-like GTPase superfamily. EngB GTPase family. Mg(2+) is required as a cofactor.

In terms of biological role, necessary for normal cell division and for the maintenance of normal septation. In Mycoplasma genitalium (strain ATCC 33530 / DSM 19775 / NCTC 10195 / G37) (Mycoplasmoides genitalium), this protein is Probable GTP-binding protein EngB.